We begin with the raw amino-acid sequence, 611 residues long: Virulence metalloprotease (611 aa).

The first 25 residues, 1-25, serve as a signal peptide directing secretion; that stretch reads MKKVQRQMKWLFLAASISAALPVSA. Positions 26–199 are excised as a propeptide; that stretch reads AKMVQVDDPS…VLQTWEGLNH (174 aa). His-346 is a binding site for Zn(2+). Residue Glu-347 is part of the active site. The Zn(2+) site is built by His-350 and Glu-370. His-429 serves as the catalytic Proton donor.

Belongs to the peptidase M4 family. Ca(2+) serves as cofactor. It depends on Zn(2+) as a cofactor. Seems to be more extensively processed.

The protein localises to the secreted. In terms of biological role, extracellular zinc metalloprotease involved in the virulence mechanism of V.anguillarum. The chain is Virulence metalloprotease (empA) from Vibrio anguillarum (Listonella anguillarum).